An 83-amino-acid polypeptide reads, in one-letter code: Arminin 3a (83 aa).

A signal peptide spans 1-18 (MKTVFAILFLTFIALTCA). Positions 19–57 (RNYEDLKEKIKNEVEREIFEDLEEESDELENNFKKFNDA) are excised as a propeptide. The residue at position 80 (Ala80) is an Alanine amide.

It belongs to the arminin family. As to expression, expressed in entodermal epithelium along the body column.

The protein localises to the secreted. Its subcellular location is the target cell membrane. Antimicrobial peptide with a broad-spectrum antimicrobial activity. Keeps its antibacterial activity under a wide range of salt concentrations that mimic physiological conditions of human blood, which is surprising, since Hydra is an obligate freshwater animal with nearly no salt tolerance. Does not affect red blood cells. The polypeptide is Arminin 3a (Hydra vulgaris (Hydra)).